Here is a 159-residue protein sequence, read N- to C-terminus: Phosphopantetheine adenylyltransferase (159 aa).

Ser9 is a substrate binding site. ATP contacts are provided by residues 9–10 and His17; that span reads SF. Substrate-binding residues include Lys41, Leu73, and Lys87. ATP-binding positions include 88 to 90, Glu98, and 123 to 129; these read GLR and YSYLSSS.

The protein belongs to the bacterial CoaD family. In terms of assembly, homohexamer. Requires Mg(2+) as cofactor.

The protein resides in the cytoplasm. The catalysed reaction is (R)-4'-phosphopantetheine + ATP + H(+) = 3'-dephospho-CoA + diphosphate. The protein operates within cofactor biosynthesis; coenzyme A biosynthesis; CoA from (R)-pantothenate: step 4/5. Functionally, reversibly transfers an adenylyl group from ATP to 4'-phosphopantetheine, yielding dephospho-CoA (dPCoA) and pyrophosphate. In Clostridium botulinum (strain Alaska E43 / Type E3), this protein is Phosphopantetheine adenylyltransferase.